The following is a 327-amino-acid chain: Malate dehydrogenase (327 aa).

G12–G18 provides a ligand contact to NAD(+). Substrate contacts are provided by R93 and R99. Residues N106, Q113, and V130–N132 each bind NAD(+). Substrate contacts are provided by N132 and R163. H188 (proton acceptor) is an active-site residue.

Belongs to the LDH/MDH superfamily. MDH type 2 family.

It catalyses the reaction (S)-malate + NAD(+) = oxaloacetate + NADH + H(+). In terms of biological role, catalyzes the reversible oxidation of malate to oxaloacetate. The sequence is that of Malate dehydrogenase from Cupriavidus metallidurans (strain ATCC 43123 / DSM 2839 / NBRC 102507 / CH34) (Ralstonia metallidurans).